The chain runs to 189 residues: MTTASCIFPSQATQQDNIYGLSQITASLFISNSAVANDKLTLSNNHITTIINVSAEVVNTFFEDIQYVQVPVSDAPNSYLYDFFDPIADHIHGVEMRNGRTLLHCAAGVSRSATLCLAYLMKYHNMTLLDAHTWTKTCRPIIRPNNGFWEQLIHYEFKLFSRNTVRMIYSPIGLIPNIYEKEAYLMELM.

The 142-residue stretch at 20–161 (GLSQITASLF…LIHYEFKLFS (142 aa)) folds into the Tyrosine-protein phosphatase domain. A sufficient for mitochondrial localization region spans residues 43 to 128 (SNNHITTIIN…YLMKYHNMTL (86 aa)). Cys105 serves as the catalytic Phosphocysteine intermediate.

The protein belongs to the protein-tyrosine phosphatase family. Non-receptor class dual specificity subfamily. Microtubule inner protein component of sperm flagellar doublet microtubules. As to expression, selectively expressed in testis.

The protein localises to the cytoplasm. It is found in the nucleus. It localises to the mitochondrion inner membrane. The protein resides in the cytoskeleton. Its subcellular location is the flagellum axoneme. The catalysed reaction is O-phospho-L-tyrosyl-[protein] + H2O = L-tyrosyl-[protein] + phosphate. The enzyme catalyses O-phospho-L-seryl-[protein] + H2O = L-seryl-[protein] + phosphate. It catalyses the reaction O-phospho-L-threonyl-[protein] + H2O = L-threonyl-[protein] + phosphate. Protein phosphatase component of the sperm flagellar doublet microtubules. May act as a regulator of sperm motility by mediating dephosphorylation of sperm doublet microtubule proteins. Can dephosphorylate single and diphosphorylated synthetic MAPK peptides, with preference for the phosphotyrosine and diphosphorylated forms over phosphothreonine. This is Dual specificity phosphatase 21 from Mus musculus (Mouse).